Reading from the N-terminus, the 356-residue chain is Beta-hexosaminidase (356 aa).

Residues aspartate 75, arginine 83, arginine 150, and 180-181 (KH) contribute to the substrate site. The active-site Proton donor/acceptor is the histidine 193. Aspartate 264 acts as the Nucleophile in catalysis.

Belongs to the glycosyl hydrolase 3 family. NagZ subfamily.

It localises to the cytoplasm. The enzyme catalyses Hydrolysis of terminal non-reducing N-acetyl-D-hexosamine residues in N-acetyl-beta-D-hexosaminides.. Its pathway is cell wall biogenesis; peptidoglycan recycling. In terms of biological role, plays a role in peptidoglycan recycling by cleaving the terminal beta-1,4-linked N-acetylglucosamine (GlcNAc) from peptide-linked peptidoglycan fragments, giving rise to free GlcNAc, anhydro-N-acetylmuramic acid and anhydro-N-acetylmuramic acid-linked peptides. The polypeptide is Beta-hexosaminidase (Aromatoleum aromaticum (strain DSM 19018 / LMG 30748 / EbN1) (Azoarcus sp. (strain EbN1))).